The primary structure comprises 510 residues: Cytochrome P450 4A6 (510 aa).

The propeptide occupies 1–4; it reads MSVS. Heme is bound by residues E321 and C457.

This sequence belongs to the cytochrome P450 family. It depends on heme as a cofactor. Liver; kidney.

The protein resides in the endoplasmic reticulum membrane. It is found in the microsome membrane. It carries out the reaction an omega-methyl-long-chain fatty acid + reduced [NADPH--hemoprotein reductase] + O2 = an omega-hydroxy-long-chain fatty acid + oxidized [NADPH--hemoprotein reductase] + H2O + H(+). Its function is as follows. Cytochromes P450 are a group of heme-thiolate monooxygenases. In liver microsomes, this enzyme is involved in an NADPH-dependent electron transport pathway. It oxidizes a variety of structurally unrelated compounds, including steroids, fatty acids, and xenobiotics. The kidney P-450 system is rather specialized for the omega-hydroxylation of fatty acids. Both P450-KA1 and P450-KA2 catalyze the omega- and (omega-1)-hydroxylation of various fatty acids with no drug-metabolizing activity, and hydroxylate prostaglandin A1 and A2 solely at the omega-position. The chain is Cytochrome P450 4A6 (CYP4A6) from Oryctolagus cuniculus (Rabbit).